We begin with the raw amino-acid sequence, 407 residues long: D-inositol 3-phosphate glycosyltransferase (407 aa).

His2 is a binding site for 1D-myo-inositol 3-phosphate. Residues 8–9 (QP) and Gly16 contribute to the UDP-N-acetyl-alpha-D-glucosamine site. Residues 13-18 (DAGGLN), Arg71, Tyr104, Thr128, and Arg148 contribute to the 1D-myo-inositol 3-phosphate site. 2 residues coordinate UDP-N-acetyl-alpha-D-glucosamine: Arg222 and Lys227. Positions 297, 298, and 300 each coordinate Mg(2+). Glu310 and Glu318 together coordinate UDP-N-acetyl-alpha-D-glucosamine. Residue Thr324 coordinates Mg(2+).

It belongs to the glycosyltransferase group 1 family. MshA subfamily. Homodimer.

The enzyme catalyses 1D-myo-inositol 3-phosphate + UDP-N-acetyl-alpha-D-glucosamine = 1D-myo-inositol 2-acetamido-2-deoxy-alpha-D-glucopyranoside 3-phosphate + UDP + H(+). In terms of biological role, catalyzes the transfer of a N-acetyl-glucosamine moiety to 1D-myo-inositol 3-phosphate to produce 1D-myo-inositol 2-acetamido-2-deoxy-glucopyranoside 3-phosphate in the mycothiol biosynthesis pathway. The polypeptide is D-inositol 3-phosphate glycosyltransferase (Frankia alni (strain DSM 45986 / CECT 9034 / ACN14a)).